Here is a 1035-residue protein sequence, read N- to C-terminus: FERM domain-containing protein 4B (1035 aa).

The FERM domain maps to 59–361 (RHCQVHLLDD…SQHQFYLDRK (303 aa)). A Phosphoserine modification is found at Ser-372. 2 coiled-coil regions span residues 414 to 451 (QDSE…LKKI) and 535 to 559 (KQDY…RIRC). Positions 542–972 (VKRLQEIENS…TQLTIGLSEY (431 aa)) are necessary for adherens junction and tight junction localization. Disordered regions lie at residues 563–615 (PSQK…ILPP), 631–699 (NEQF…LESQ), 713–738 (FTLS…SQSS), and 754–798 (TQTL…SKGQ). A compositionally biased stretch (low complexity) spans 571-590 (PPEDIIPSESSSLSDTTTYD). Residues 594 to 607 (DSFTLAGQRPSSVP) show a composition bias toward polar residues. Ser-609 carries the phosphoserine modification. Residues 635–644 (MDTRHSREML) are compositionally biased toward basic and acidic residues. Polar residues-rich tracts occupy residues 664 to 699 (MPTT…LESQ) and 715 to 725 (LSKSQRSSSTE). Ser-698 is modified (phosphoserine). Residues 762-771 (RGRRRSKKHS) show a composition bias toward basic residues. Positions 772–782 (VSTSNSGSMPN) are enriched in polar residues. A Glycyl lysine isopeptide (Lys-Gly) (interchain with G-Cter in SUMO2) cross-link involves residue Lys-883. Disordered regions lie at residues 906–926 (RASG…SDRG), 939–958 (PCSP…TNAS), and 994–1035 (PSRQ…GTLV). Residues 907 to 921 (ASGQKDQGHSPQTSF) are compositionally biased toward polar residues. Ser-916 is subject to Phosphoserine. Low complexity predominate over residues 941–958 (SPSSRASSYSSVSSTNAS). The span at 1019–1035 (SEQRLFWHEDSKPGTLV) shows a compositional bias: basic and acidic residues. Lys-1030 is covalently cross-linked (Glycyl lysine isopeptide (Lys-Gly) (interchain with G-Cter in SUMO2)).

Interacts with CYTH3. Interacts with PARD3. Interacts with CYTH1. In terms of tissue distribution, isoform 1 is expressed in the brain. Isoform 2 is expressed in the lung (at protein level).

Its subcellular location is the cytoplasm. It is found in the cytoskeleton. The protein localises to the cell junction. It localises to the tight junction. The protein resides in the adherens junction. Member of GRP1 signaling complexes that are acutely recruited to plasma membrane ruffles in response to insulin receptor signaling. May function as a scaffolding protein that regulates epithelial cell polarity by connecting ARF6 activation with the PAR3 complex. Plays a redundant role with FRMD4A in epithelial polarization. The protein is FERM domain-containing protein 4B (Frmd4b) of Mus musculus (Mouse).